Here is a 564-residue protein sequence, read N- to C-terminus: Eukaryotic translation initiation factor 3 subunit L (564 aa).

A PCI domain is found at 331-537 (DAIRVFANIL…IHIADTKVAR (207 aa)).

The protein belongs to the eIF-3 subunit L family. In terms of assembly, component of the eukaryotic translation initiation factor 3 (eIF-3) complex, which is composed of 13 subunits: EIF3A, EIF3B, EIF3C, EIF3D, EIF3E, EIF3F, EIF3G, EIF3H, EIF3I, EIF3J, EIF3K, EIF3L and EIF3M.

Its subcellular location is the cytoplasm. Its function is as follows. Component of the eukaryotic translation initiation factor 3 (eIF-3) complex, which is involved in protein synthesis of a specialized repertoire of mRNAs and, together with other initiation factors, stimulates binding of mRNA and methionyl-tRNAi to the 40S ribosome. The eIF-3 complex specifically targets and initiates translation of a subset of mRNAs involved in cell proliferation. This Gallus gallus (Chicken) protein is Eukaryotic translation initiation factor 3 subunit L.